A 141-amino-acid chain; its full sequence is Hemoglobin subunit alpha (141 aa).

A Globin domain is found at 1–141 (VLSPADKSNV…VSTVLTSKYR (141 aa)). Ser-3 carries the post-translational modification Phosphoserine. 2 positions are modified to N6-succinyllysine: Lys-7 and Lys-11. Lys-16 carries the N6-acetyllysine; alternate modification. Lys-16 carries the post-translational modification N6-succinyllysine; alternate. At Tyr-24 the chain carries Phosphotyrosine. Ser-35 carries the phosphoserine modification. Lys-40 is subject to N6-succinyllysine. Residue Ser-49 is modified to Phosphoserine. Position 58 (His-58) interacts with O2. His-87 contributes to the heme b binding site. Ser-102 carries the phosphoserine modification. The residue at position 108 (Thr-108) is a Phosphothreonine. A phosphoserine mark is found at Ser-124 and Ser-131. Phosphothreonine occurs at positions 134 and 137. Ser-138 bears the Phosphoserine mark.

This sequence belongs to the globin family. Heterotetramer of two alpha chains and two beta chains. Red blood cells.

In terms of biological role, involved in oxygen transport from the lung to the various peripheral tissues. Its function is as follows. Hemopressin acts as an antagonist peptide of the cannabinoid receptor CNR1. Hemopressin-binding efficiently blocks cannabinoid receptor CNR1 and subsequent signaling. The polypeptide is Hemoglobin subunit alpha (HBA) (Saguinus oedipus (Cotton-top tamarin)).